The following is a 326-amino-acid chain: Serine hydrolase-like protein (326 aa).

Residues 44–155 (PVLCLHGWAD…FLPTEVTDMF (112 aa)) enclose the AB hydrolase-1 domain. S118 is an active-site residue.

This sequence belongs to the AB hydrolase superfamily.

In terms of biological role, probable serine hydrolase. This chain is Serine hydrolase-like protein (serhl), found in Danio rerio (Zebrafish).